We begin with the raw amino-acid sequence, 309 residues long: Taste receptor type 2 member 43 (309 aa).

Residue M1 is a topological domain, extracellular. Residues 2-22 form a helical membrane-spanning segment; sequence ITFLPIIFSSLVVVTFVIGNF. Residues 23–46 are Cytoplasmic-facing; sequence ANGFIALVNSIEWFKRQKISFADQ. The chain crosses the membrane as a helical span at residues 47–67; it reads ILTALAVSRVGLLWVLLLNWY. Over 68 to 86 the chain is Extracellular; it reads STVLNPAFNSVEVRTTAYN. A helical transmembrane segment spans residues 87–107; that stretch reads IWAVINHFSNWLATSLSIFYL. Topologically, residues 108-126 are cytoplasmic; sequence LKIANFSNFIFLHLKRRVK. The chain crosses the membrane as a helical span at residues 127–147; it reads SVILVMLLGPLLFLACHLFVI. Topologically, residues 148-178 are extracellular; it reads NMNEIVRTKEFEGNMTWKIKLKSAMYFSNMT. N161 and N176 each carry an N-linked (GlcNAc...) asparagine glycan. The helical transmembrane segment at 179-199 threads the bilayer; sequence VTMVANLVPFTLTLLSFLLLI. Over 200–229 the chain is Cytoplasmic; the sequence is CSLCKHLKKMQLHGKGSQDPSTKVHIKVLQ. Residues 230 to 250 form a helical membrane-spanning segment; it reads TVISFLLLCAIYFLSIMISVW. The Extracellular segment spans residues 251–259; the sequence is SFGSLKNKP. Residues 260-280 form a helical membrane-spanning segment; the sequence is VFMFCKAMRFSYPSIHPFILI. The Cytoplasmic segment spans residues 281–309; that stretch reads WGNKKLKQTFLSVFWQMRYWVKGEKTSSP.

The protein belongs to the G-protein coupled receptor T2R family.

Its subcellular location is the membrane. The protein localises to the cell projection. The protein resides in the cilium membrane. Gustducin-coupled receptor immplicated in the perception of bitter compounds in the oral cavity and the gastrointestinal tract. Signals through PLCB2 and the calcium-regulated cation channel TRPM5. Activated by the sulfonyl amide sweeteners saccharin and acesulfame K. In airway epithelial cells, binding of bitter compounds increases the intracellular calcium ion concentration and stimulates ciliary beat frequency. May act as chemosensory receptors in airway epithelial cells to detect and eliminate potential noxious agents from the airways. This Pan troglodytes (Chimpanzee) protein is Taste receptor type 2 member 43 (TAS2R43).